Here is a 134-residue protein sequence, read N- to C-terminus: uncharacterized protein (134 aa).

A run of 2 helical transmembrane segments spans residues 16–36 (IFSF…NTKL) and 43–63 (IAYF…IHGT).

The protein belongs to the plectrovirus ORF5 family.

The protein resides in the host membrane. This is an uncharacterized protein from Spiroplasma citri (SpV1).